Reading from the N-terminus, the 284-residue chain is Bifunctional protein FolD (284 aa).

NADP(+) is bound by residues 165-167 and Ser190; that span reads GRS.

It belongs to the tetrahydrofolate dehydrogenase/cyclohydrolase family. Homodimer.

It catalyses the reaction (6R)-5,10-methylene-5,6,7,8-tetrahydrofolate + NADP(+) = (6R)-5,10-methenyltetrahydrofolate + NADPH. The catalysed reaction is (6R)-5,10-methenyltetrahydrofolate + H2O = (6R)-10-formyltetrahydrofolate + H(+). The protein operates within one-carbon metabolism; tetrahydrofolate interconversion. In terms of biological role, catalyzes the oxidation of 5,10-methylenetetrahydrofolate to 5,10-methenyltetrahydrofolate and then the hydrolysis of 5,10-methenyltetrahydrofolate to 10-formyltetrahydrofolate. This is Bifunctional protein FolD from Streptococcus equi subsp. equi (strain 4047).